A 189-amino-acid polypeptide reads, in one-letter code: MSKPTREEAKEAVRTLLKFIGEDPSREGLLKTPDRVINSYAEIFSGYGKDVAEILNTKFYETCNFRDFILLNIKFTSFCEHHILPFNGTVDIAYVPDNCIVGISKLARIVNIFARRLQIQEKMTVQIAESVQENLKPLGVAVKISAVHSCMSMRGVMQDNSVMNTMHYTGIFAEQQKYRHEFLNLTAKR.

C79, H82, and C150 together coordinate Zn(2+).

It belongs to the GTP cyclohydrolase I family. As to quaternary structure, homomer.

The catalysed reaction is GTP + H2O = 7,8-dihydroneopterin 3'-triphosphate + formate + H(+). It functions in the pathway cofactor biosynthesis; 7,8-dihydroneopterin triphosphate biosynthesis; 7,8-dihydroneopterin triphosphate from GTP: step 1/1. This is GTP cyclohydrolase 1 from Rickettsia rickettsii (strain Iowa).